The sequence spans 59 residues: Large ribosomal subunit protein bL32 (59 aa).

This sequence belongs to the bacterial ribosomal protein bL32 family.

The polypeptide is Large ribosomal subunit protein bL32 (Thermodesulfovibrio yellowstonii (strain ATCC 51303 / DSM 11347 / YP87)).